We begin with the raw amino-acid sequence, 41 residues long: uncharacterized protein (41 aa).

This is an uncharacterized protein from Archaeoglobus fulgidus (strain ATCC 49558 / DSM 4304 / JCM 9628 / NBRC 100126 / VC-16).